We begin with the raw amino-acid sequence, 956 residues long: Translation initiation factor IF-2 (956 aa).

The segment at 68-357 (APEAAAPKAP…GVSVPRGDGN (290 aa)) is disordered. Composition is skewed to low complexity over residues 86–123 (AKPA…APAV), 141–156 (PGNN…PRAG), 164–175 (PAAAPASGAGRP), and 212–235 (GPRP…RPAA). Composition is skewed to gly residues over residues 236–257 (GSGG…GGGN) and 276–324 (RGAG…GAGR). The segment covering 325–334 (GKQRKSKRAK) has biased composition (basic residues). In terms of domain architecture, tr-type G spans 449 to 620 (ARPPVVTVMG…AVMLTADAAL (172 aa)). The interval 458 to 465 (GHVDHGKT) is G1. 458 to 465 (GHVDHGKT) contributes to the GTP binding site. The tract at residues 483 to 487 (GITQH) is G2. Residues 508–511 (DTPG) form a G3 region. GTP is bound by residues 508–512 (DTPGH) and 562–565 (NKID). A G4 region spans residues 562 to 565 (NKID). The tract at residues 598 to 600 (SAR) is G5.

The protein belongs to the TRAFAC class translation factor GTPase superfamily. Classic translation factor GTPase family. IF-2 subfamily.

It localises to the cytoplasm. In terms of biological role, one of the essential components for the initiation of protein synthesis. Protects formylmethionyl-tRNA from spontaneous hydrolysis and promotes its binding to the 30S ribosomal subunits. Also involved in the hydrolysis of GTP during the formation of the 70S ribosomal complex. The polypeptide is Translation initiation factor IF-2 (Renibacterium salmoninarum (strain ATCC 33209 / DSM 20767 / JCM 11484 / NBRC 15589 / NCIMB 2235)).